Here is a 581-residue protein sequence, read N- to C-terminus: MPKPINVRVTTMDAELEFAIQPNTTGKQLFDQVVKTIGLREVWYFGLQYVDNKGFPTWLKLDKKVSAQEVRKESPLQFKFRAKFYPEDVAEELIQDITQKLFFLQVKEGILSDEIYCPPETAVLLGSYAVQAKFGDYNKELHKAGYLGSERLIPQRVMDQHKLTRDQWEDRIQVWHAEHRGMLKDSAMLEYLKIAQDLEMYGINYFEIKNKKGTDLWLGVDALGLNIYEKDDKLTPKIGFPWSEIRNISFNDKKFVIKPIDKKAPDFVFYAPRLRINKRILQLCMGNHELYMRRRKPDTIEVQQMKAQAREEKHQKQLERQQLETEKKRRETVEREKEQMMREKEELMLRLQDYEEKTRKAEKELSDQIQRALKLEEERKRAQEEAGRLEADRLAALRAKEELERQAADQIKSQEQLATELAEYTAKIALLEEARRRKENEVEEWQLRAKEAQDDLVKTREELHLVMTAPPPPPVYEPVNYHVHEGPQEEGTELSAELSSEGILDDRNEEKRITEAEKNERVQRQLMTLTSELSQARDENKRTHNDIIHNENMRQGRDKYKTLRQIRQGNTKQRIDEFEAM.

The 294-residue stretch at 2–295 (PKPINVRVTT…GNHELYMRRR (294 aa)) folds into the FERM domain. Lys60 bears the N6-acetyllysine mark. The [IL]-x-C-x-x-[DE] motif signature appears at 115 to 120 (IYCPPE). Tyr146 bears the Phosphotyrosine; by PDGFR mark. The interaction with SCYL3 stretch occupies residues 244-581 (EIRNISFNDK…KQRIDEFEAM (338 aa)). Residues 302-462 (VQQMKAQARE…QDDLVKTREE (161 aa)) are a coiled coil. Residues 306 to 341 (KAQAREEKHQKQLERQQLETEKKRRETVEREKEQMM) are disordered. Residues 308–341 (QAREEKHQKQLERQQLETEKKRRETVEREKEQMM) are compositionally biased toward basic and acidic residues. Position 354 is a phosphotyrosine; by PDGFR (Tyr354). Ser366 is modified (phosphoserine). Tyr476 carries the post-translational modification Phosphotyrosine. The interval 534–560 (SQARDENKRTHNDIIHNENMRQGRDKY) is disordered. Basic and acidic residues predominate over residues 535-560 (QARDENKRTHNDIIHNENMRQGRDKY). Phosphothreonine; by ROCK2 and PKC/PRKCI is present on Thr562.

In terms of assembly, interacts with PALS1 and NHERF2. Found in a complex with EZR, PODXL and NHERF2. Interacts with MCC, PLEKHG6, PODXL, SCYL3/PACE1, NHERF1 and TMEM8B. Interacts (when phosphorylated) with FES/FPS. Interacts with dimeric S100P, the interaction may be activating through unmasking of F-actin binding sites. Identified in complexes that contain VIM, EZR, AHNAK, BFSP1, BFSP2, ANK2, PLEC, PRX and spectrin. Detected in a complex composed of at least EZR, AHNAK, PPL and PRX. Interacts with PDPN (via cytoplasmic domain); activates RHOA and promotes epithelial-mesenchymal transition. Interacts with SPN/CD43 cytoplasmic tail, CD44 and ICAM2. Interacts with SLC9A3; interaction targets SLC9A3 to the apical membrane. Interacts with SLC9A1; regulates interactions of SLC9A1 with cytoskeletal and promotes stress fiber formation. Interacts with CLIC5; may work together in a complex which also includes RDX and MYO6 to stabilize linkages between the plasma membrane and subjacent actin cytoskeleton at the base of stereocilia. Phosphorylated by tyrosine-protein kinases. Phosphorylation by ROCK2 suppresses the head-to-tail association of the N-terminal and C-terminal halves resulting in an opened conformation which is capable of actin and membrane-binding. In terms of processing, S-nitrosylation is induced by interferon-gamma and oxidatively-modified low-densitity lipoprotein (LDL(ox)) possibly implicating the iNOS-S100A8/9 transnitrosylase complex. In terms of tissue distribution, detected in eye lens fiber cells (at protein level).

Its subcellular location is the apical cell membrane. It is found in the cell projection. The protein localises to the microvillus membrane. The protein resides in the ruffle membrane. It localises to the cytoplasm. Its subcellular location is the cell cortex. It is found in the cytoskeleton. The protein localises to the microvillus. With respect to regulation, a head-to-tail association, of the N-terminal and C-terminal halves results in a closed conformation (inactive form) which is incapable of actin or membrane-binding. Its function is as follows. Probably involved in connections of major cytoskeletal structures to the plasma membrane. In epithelial cells, required for the formation of microvilli and membrane ruffles on the apical pole. Along with PLEKHG6, required for normal macropinocytosis. The sequence is that of Ezrin (EZR) from Bos taurus (Bovine).